The chain runs to 436 residues: 3-ketoacyl-CoA thiolase (436 aa).

Cys-99 acts as the Acyl-thioester intermediate in catalysis. Active-site proton acceptor residues include His-392 and Cys-422.

The protein belongs to the thiolase-like superfamily. Thiolase family. In terms of assembly, heterotetramer of two alpha chains (FadJ) and two beta chains (FadI).

Its subcellular location is the cytoplasm. It catalyses the reaction an acyl-CoA + acetyl-CoA = a 3-oxoacyl-CoA + CoA. Its pathway is lipid metabolism; fatty acid beta-oxidation. Its function is as follows. Catalyzes the final step of fatty acid oxidation in which acetyl-CoA is released and the CoA ester of a fatty acid two carbons shorter is formed. The polypeptide is 3-ketoacyl-CoA thiolase (Escherichia coli O9:H4 (strain HS)).